A 1076-amino-acid polypeptide reads, in one-letter code: JmjC domain-containing histone demethylation protein 1 (1076 aa).

The 173-residue stretch at 93 to 265 folds into the JmjC domain; the sequence is FSQTPLEDLV…TQLRVYQVEN (173 aa). Threonine 159 serves as a coordination point for substrate. Histidine 162 and aspartate 164 together coordinate Fe cation. Residue lysine 179 participates in substrate binding. Histidine 233 contacts Fe cation. 2 disordered regions span residues 598-748 and 789-1056; these read FEEE…DPVV and KIEP…KIPS. Acidic residues predominate over residues 610–634; the sequence is DQEEEEYDAEEPEDQEEEEEDEYQA. Positions 653 to 680 are enriched in basic and acidic residues; the sequence is AKNDESEEVSVKKDKKEKMEKVEKDEKR. Positions 681–698 are enriched in basic residues; it reads RNSKSKKDKISKEKKKKE. Basic and acidic residues-rich tracts occupy residues 699–714 and 789–811; these read RERIELESQLDAELRA and KIEPKRGSEEGSQSREQSMEPEH. Residues 935 to 946 are compositionally biased toward low complexity; it reads ASAPSSRHSSIS. Composition is skewed to polar residues over residues 957–990 and 1004–1019; these read FNSSRNSSIDTPYTPTTVTPSRSSWLPNTSSINR and DSLSPINIASSPTYPT. The span at 1044–1056 shows a compositional bias: basic and acidic residues; the sequence is QHHDDGHKHKIPS.

The protein belongs to the JHDM1 histone demethylase family. Requires Fe(2+) as cofactor.

It is found in the nucleus. It carries out the reaction N(6),N(6)-dimethyl-L-lysyl(36)-[histone H3] + 2 2-oxoglutarate + 2 O2 = L-lysyl(36)-[histone H3] + 2 formaldehyde + 2 succinate + 2 CO2. In terms of biological role, histone demethylase that specifically demethylates 'Lys-36' of histone H3, thereby playing a central role in histone code. Has a role in regulating lifespan. This is JmjC domain-containing histone demethylation protein 1 (jhdm-1) from Caenorhabditis elegans.